A 540-amino-acid polypeptide reads, in one-letter code: Chaperonin GroEL (540 aa).

Residues 30 to 33, Lys51, 87 to 91, Gly415, and Asp495 each bind ATP; these read TLGP and DGTTT.

Belongs to the chaperonin (HSP60) family. In terms of assembly, forms a cylinder of 14 subunits composed of two heptameric rings stacked back-to-back. Interacts with the co-chaperonin GroES.

Its subcellular location is the cytoplasm. It catalyses the reaction ATP + H2O + a folded polypeptide = ADP + phosphate + an unfolded polypeptide.. In terms of biological role, together with its co-chaperonin GroES, plays an essential role in assisting protein folding. The GroEL-GroES system forms a nano-cage that allows encapsulation of the non-native substrate proteins and provides a physical environment optimized to promote and accelerate protein folding. This chain is Chaperonin GroEL, found in Erwinia aphidicola.